A 388-amino-acid polypeptide reads, in one-letter code: Gastricsin (388 aa).

Residues 1–16 (MKWMVVVLVCLQLLEA) form the signal peptide. The propeptide at 17–59 (AVVKVPLKKFKSIRETMKEKGLLGEFLRTHKYDPAWKYRFGDL) is activation peptide. The 313-residue stretch at 73–385 (YFGEISIGTP…DLGNNRVGFA (313 aa)) folds into the Peptidase A1 domain. Aspartate 91 is an active-site residue. 2 cysteine pairs are disulfide-bonded: cysteine 104-cysteine 109 and cysteine 267-cysteine 271. Aspartate 276 is a catalytic residue. A disulfide bridge links cysteine 310 with cysteine 343.

Belongs to the peptidase A1 family.

The protein resides in the secreted. The enzyme catalyses More restricted specificity than pepsin A, but shows preferential cleavage at Tyr-|-Xaa bonds. High activity on hemoglobin.. In terms of biological role, hydrolyzes a variety of proteins. The protein is Gastricsin (PGC) of Homo sapiens (Human).